We begin with the raw amino-acid sequence, 346 residues long: dTDP-glucose 4,6-dehydratase (346 aa).

Residues Phe17–Ile18, Asp38–Thr41, Asp64–Ile65, Leu86–Ser90, and Thr105 each bind NAD(+). Residue Ser90 participates in substrate binding. Residue Thr139 coordinates substrate. Asp140 acts as the Proton donor in catalysis. Catalysis depends on proton acceptor residues Glu141 and Tyr165. Tyr165 to Lys169 contributes to the NAD(+) binding site. Asn194 lines the substrate pocket. Asn195 is an NAD(+) binding site. Residues Lys204 to Leu205, Pro220 to Tyr222, Arg229, Asn264, and Asp298 to His302 contribute to the substrate site.

This sequence belongs to the NAD(P)-dependent epimerase/dehydratase family. dTDP-glucose dehydratase subfamily. In terms of assembly, homodimer. NAD(+) is required as a cofactor.

It carries out the reaction dTDP-alpha-D-glucose = dTDP-4-dehydro-6-deoxy-alpha-D-glucose + H2O. It functions in the pathway carbohydrate biosynthesis; dTDP-L-rhamnose biosynthesis. It participates in bacterial outer membrane biogenesis; LPS O-antigen biosynthesis. Catalyzes the dehydration of dTDP-D-glucose to form dTDP-6-deoxy-D-xylo-4-hexulose via a three-step process involving oxidation, dehydration and reduction. The chain is dTDP-glucose 4,6-dehydratase from Neisseria gonorrhoeae.